Consider the following 174-residue polypeptide: Nicotinamide-nucleotide adenylyltransferase (174 aa).

Belongs to the archaeal NMN adenylyltransferase family.

The protein resides in the cytoplasm. It catalyses the reaction beta-nicotinamide D-ribonucleotide + ATP + H(+) = diphosphate + NAD(+). It participates in cofactor biosynthesis; NAD(+) biosynthesis; NAD(+) from nicotinamide D-ribonucleotide: step 1/1. The sequence is that of Nicotinamide-nucleotide adenylyltransferase from Archaeoglobus fulgidus (strain ATCC 49558 / DSM 4304 / JCM 9628 / NBRC 100126 / VC-16).